A 275-amino-acid polypeptide reads, in one-letter code: 2-dehydro-3-deoxyphosphooctonate aldolase (275 aa).

It belongs to the KdsA family.

The protein resides in the cytoplasm. It carries out the reaction D-arabinose 5-phosphate + phosphoenolpyruvate + H2O = 3-deoxy-alpha-D-manno-2-octulosonate-8-phosphate + phosphate. Its pathway is carbohydrate biosynthesis; 3-deoxy-D-manno-octulosonate biosynthesis; 3-deoxy-D-manno-octulosonate from D-ribulose 5-phosphate: step 2/3. It functions in the pathway bacterial outer membrane biogenesis; lipopolysaccharide biosynthesis. This chain is 2-dehydro-3-deoxyphosphooctonate aldolase, found in Protochlamydia amoebophila (strain UWE25).